Consider the following 318-residue polypeptide: tRNA methyltransferase 10 homolog B (318 aa).

The span at 1–10 (MDCKSEESAQ) shows a compositional bias: basic and acidic residues. The tract at residues 1–105 (MDCKSEESAQ…DPGNGTCPQH (105 aa)) is disordered. Positions 52–63 (SPANSAVWSSKN) are enriched in polar residues. The span at 64–83 (MQRKQRHWERIVSSKKSKRK) shows a compositional bias: basic residues. Residues 72–93 (ERIVSSKKSKRKQERERRKAKR) adopt a coiled-coil conformation. Positions 84-96 (QERERRKAKRAED) are enriched in basic and acidic residues. Positions 114 to 311 (TKEKLLEAKH…KGVSPGKGYV (198 aa)) constitute an SAM-dependent MTase TRM10-type domain.

The protein belongs to the class IV-like SAM-binding methyltransferase superfamily. TRM10 family.

The enzyme catalyses guanosine(9) in tRNA + S-adenosyl-L-methionine = N(1)-methylguanosine(9) in tRNA + S-adenosyl-L-homocysteine + H(+). In terms of biological role, S-adenosyl-L-methionine-dependent guanine N(1)-methyltransferase that catalyzes the formation of N(1)-methylguanine at position 9 (m1G9) in tRNAs. Probably not able to catalyze formation of N(1)-methyladenine at position 9 (m1A9) in tRNAs. This chain is tRNA methyltransferase 10 homolog B (Trmt10b), found in Mus musculus (Mouse).